Here is a 58-residue protein sequence, read N- to C-terminus: Enterocin-HF (58 aa).

A propeptide spanning residues 1–15 (MEKLTVKEMSQVVGG) is cleaved from the precursor. Cys24 and Cys29 form a disulfide bridge.

The protein localises to the secreted. Bacteriocin. This Enterococcus faecium (Streptococcus faecium) protein is Enterocin-HF (entHF).